The following is a 408-amino-acid chain: 8-amino-7-oxononanoate synthase (408 aa).

Arg-20 lines the substrate pocket. 119-120 (GY) contributes to the pyridoxal 5'-phosphate binding site. His-144 is a substrate binding site. Residues Ser-190, His-218, and Thr-246 each coordinate pyridoxal 5'-phosphate. Lys-249 carries the N6-(pyridoxal phosphate)lysine modification. Thr-372 is a binding site for substrate.

Belongs to the class-II pyridoxal-phosphate-dependent aminotransferase family. BioF subfamily. In terms of assembly, homodimer. Pyridoxal 5'-phosphate is required as a cofactor.

The enzyme catalyses 6-carboxyhexanoyl-[ACP] + L-alanine + H(+) = (8S)-8-amino-7-oxononanoate + holo-[ACP] + CO2. The protein operates within cofactor biosynthesis; biotin biosynthesis. Catalyzes the decarboxylative condensation of pimeloyl-[acyl-carrier protein] and L-alanine to produce 8-amino-7-oxononanoate (AON), [acyl-carrier protein], and carbon dioxide. This is 8-amino-7-oxononanoate synthase from Leptothrix cholodnii (strain ATCC 51168 / LMG 8142 / SP-6) (Leptothrix discophora (strain SP-6)).